A 269-amino-acid chain; its full sequence is Ribosomal RNA small subunit methyltransferase A (269 aa).

Positions 12, 14, 39, 60, 81, and 103 each coordinate S-adenosyl-L-methionine.

This sequence belongs to the class I-like SAM-binding methyltransferase superfamily. rRNA adenine N(6)-methyltransferase family. RsmA subfamily.

It localises to the cytoplasm. The enzyme catalyses adenosine(1518)/adenosine(1519) in 16S rRNA + 4 S-adenosyl-L-methionine = N(6)-dimethyladenosine(1518)/N(6)-dimethyladenosine(1519) in 16S rRNA + 4 S-adenosyl-L-homocysteine + 4 H(+). Specifically dimethylates two adjacent adenosines (A1518 and A1519) in the loop of a conserved hairpin near the 3'-end of 16S rRNA in the 30S particle. May play a critical role in biogenesis of 30S subunits. The protein is Ribosomal RNA small subunit methyltransferase A of Leptothrix cholodnii (strain ATCC 51168 / LMG 8142 / SP-6) (Leptothrix discophora (strain SP-6)).